The chain runs to 141 residues: VLTDAERKEVTSLWGKASGHAEDYGAEALERLFLSFPTTKTYFSHMDLSKGSAHVRAHGKKVADALTTAVGHFNDMDGALSDLSDLHAHKLRVDPVNFKLLAHCFLVVLARHHPEEFTPSAHAAMDKFLSRVATVLTSKYR.

Residues 1-141 (VLTDAERKEV…VATVLTSKYR (141 aa)) enclose the Globin domain. Histidine 58 lines the O2 pocket. Histidine 87 contributes to the heme b binding site.

It belongs to the globin family. Heterotetramer of two alpha chains and two beta chains. Red blood cells.

Involved in oxygen transport from the lung to the various peripheral tissues. The sequence is that of Hemoglobin subunit alpha-2 from Tachyglossus aculeatus aculeatus (Southeast Australian short-beaked echidna).